Consider the following 387-residue polypeptide: NADPH-dependent aldehyde reductase YqhD (387 aa).

NADP(+)-binding residues include G38, S40, N68, G95, S96, D99, T138, N147, G149, K160, Y179, and T182. Residues D194, H198, H267, and H281 each contribute to the Zn(2+) site.

This sequence belongs to the iron-containing alcohol dehydrogenase family. As to quaternary structure, homodimer. The crystals contain two dimers in the asymmetric unit. The cofactor is Zn(2+).

It carries out the reaction a primary alcohol + NADP(+) = an aldehyde + NADPH + H(+). The catalysed reaction is butan-1-ol + NADP(+) = butanal + NADPH + H(+). The enzyme catalyses 1-propanol + NADP(+) = propanal + NADPH + H(+). It catalyses the reaction allyl alcohol + NADP(+) = acrolein + NADPH + H(+). Functionally, exhibits NADPH-dependent reductase activity for a broad range of short-chain aldehydes. Shows highest catalytic efficiency toward butanal, propanal and the highly toxic aldehydes acrolein and malondialdehyde (MDA), which are produced mainly during lipid peroxidation. Mediates resistance to reactive oxygen species (ROS) elicitors, such as paraquat and potassium tellurite, probably by protecting the cell against the toxic effects of reactive aldehydes derived from membrane lipid peroxidation. Also acts, with lower efficiency, on acetaldehyde, glyceraldehyde, glycolaldehyde, methylglyoxal, glyoxal and hydroxyacetone. Could be involved in glyoxal metabolism, by catalyzing the reduction of glyoxal to glycolaldehyde, and further to 1,2-ethandiol. Catalyzes the reduction of isobutyraldehyde (2-methylpropanal) to isobutanol, and probably contributes to the production of isobutanol. Can probably catalyze the reduction of glutaraldehyde, a widely used biocide, to 1,5-pentanediol, which is non-toxic. Overexpression of YqhD protects the cells against glutaraldehyde toxicity. Can catalyze in vitro the NADPH-dependent reduction of furfural, a natural product of lignocellulosic decomposition, to the less toxic product, furfuryl alcohol. However, it is unlikely that furfural is a physiological substrate. Its function is as follows. In contrast, Sulzenbacher et al. detected significant activities only in the presence of alcohol and NADP(+). They reported in vitro NADP(+)-dependent alcohol dehydrogenase (ADH) activity towards various alcohols, with a preference for alcohols longer than C(3), but the affinity for the substrates is poor, suggesting that these compounds are not the physiological substrates. Perez et al. did not detect dehydrogenase activity with short and medium chain alcohols such as methanol, ethanol, propanol, butanol or isopropanol. This Escherichia coli (strain K12) protein is NADPH-dependent aldehyde reductase YqhD (yqhD).